We begin with the raw amino-acid sequence, 369 residues long: Anhydro-N-acetylmuramic acid kinase (369 aa).

Residue 12 to 19 (GTSLDGVD) coordinates ATP.

It belongs to the anhydro-N-acetylmuramic acid kinase family.

The catalysed reaction is 1,6-anhydro-N-acetyl-beta-muramate + ATP + H2O = N-acetyl-D-muramate 6-phosphate + ADP + H(+). Its pathway is amino-sugar metabolism; 1,6-anhydro-N-acetylmuramate degradation. The protein operates within cell wall biogenesis; peptidoglycan recycling. Its function is as follows. Catalyzes the specific phosphorylation of 1,6-anhydro-N-acetylmuramic acid (anhMurNAc) with the simultaneous cleavage of the 1,6-anhydro ring, generating MurNAc-6-P. Is required for the utilization of anhMurNAc either imported from the medium or derived from its own cell wall murein, and thus plays a role in cell wall recycling. The sequence is that of Anhydro-N-acetylmuramic acid kinase from Escherichia coli O8 (strain IAI1).